A 132-amino-acid polypeptide reads, in one-letter code: tRNA (cytidine(56)-2'-O)-methyltransferase (132 aa).

Residues Leu35, 65–69 (GSEKV), and 83–90 (IGNQPHSE) each bind S-adenosyl-L-methionine.

It belongs to the aTrm56 family. In terms of assembly, homodimer.

It localises to the cytoplasm. It carries out the reaction cytidine(56) in tRNA + S-adenosyl-L-methionine = 2'-O-methylcytidine(56) in tRNA + S-adenosyl-L-homocysteine + H(+). Its function is as follows. Specifically catalyzes the AdoMet-dependent 2'-O-ribose methylation of cytidine at position 56 in tRNAs. The chain is tRNA (cytidine(56)-2'-O)-methyltransferase from Sulfolobus acidocaldarius (strain ATCC 33909 / DSM 639 / JCM 8929 / NBRC 15157 / NCIMB 11770).